We begin with the raw amino-acid sequence, 140 residues long: Ribonuclease P protein component (140 aa).

The interval 115 to 140 is disordered; that stretch reads RCKPGAPKPPPFKKRPNKSVKSNKQT.

It belongs to the RnpA family. As to quaternary structure, consists of a catalytic RNA component (M1 or rnpB) and a protein subunit.

It carries out the reaction Endonucleolytic cleavage of RNA, removing 5'-extranucleotides from tRNA precursor.. RNaseP catalyzes the removal of the 5'-leader sequence from pre-tRNA to produce the mature 5'-terminus. It can also cleave other RNA substrates such as 4.5S RNA. The protein component plays an auxiliary but essential role in vivo by binding to the 5'-leader sequence and broadening the substrate specificity of the ribozyme. The polypeptide is Ribonuclease P protein component (Pseudoalteromonas translucida (strain TAC 125)).